The primary structure comprises 343 residues: Phenylalanine--tRNA ligase alpha subunit (343 aa).

Glutamate 256 is a Mg(2+) binding site.

This sequence belongs to the class-II aminoacyl-tRNA synthetase family. Phe-tRNA synthetase alpha subunit type 1 subfamily. In terms of assembly, tetramer of two alpha and two beta subunits. The cofactor is Mg(2+).

Its subcellular location is the cytoplasm. It carries out the reaction tRNA(Phe) + L-phenylalanine + ATP = L-phenylalanyl-tRNA(Phe) + AMP + diphosphate + H(+). In Aster yellows witches'-broom phytoplasma (strain AYWB), this protein is Phenylalanine--tRNA ligase alpha subunit.